A 587-amino-acid chain; its full sequence is Protein SIX6OS1 (587 aa).

The segment at 356–378 (TPQKQSNSNQWSEKGDKDAEYGD) is disordered. A compositionally biased stretch (polar residues) spans 357-367 (PQKQSNSNQWS). Over residues 368-378 (EKGDKDAEYGD) the composition is skewed to basic and acidic residues. Ser439 is subject to Phosphoserine. The segment at 568 to 587 (SSSLKGFSSSSQNTTQFTFF) is disordered.

As to quaternary structure, interacts with SYCE1. Interacts with proteasome subunit PSMA8; to participate in meiosis progression during spermatogenesis. Highest expression in retina, skeletal muscle, testis and colon.

It localises to the chromosome. In terms of biological role, meiotic protein that localizes to the central element of the synaptonemal complex and is required for chromosome synapsis during meiotic recombination. Required for the appropriate processing of intermediate recombination nodules before crossover formation. The chain is Protein SIX6OS1 from Homo sapiens (Human).